A 578-amino-acid chain; its full sequence is ATP-dependent RNA helicase has1 (578 aa).

Over residues 1–12 the composition is skewed to basic residues; it reads MAKSELKRKKHQ. Residues 1 to 81 are disordered; it reads MAKSELKRKK…ERVQKSVNLN (81 aa). Composition is skewed to acidic residues over residues 36–53 and 60–71; these read LPQD…EDAD and SESEELDNENED. A phosphoserine mark is found at S60 and S62. Positions 89–117 match the Q motif motif; the sequence is EKFSDLQLSENIQKAIKEMGFETMTEIQK. Residues 120–296 form the Helicase ATP-binding domain; that stretch reads IPPLLAGRDV…RISLKPGPLY (177 aa). 133–140 contacts ATP; sequence AKTGSGKT. A DEAD box motif is present at residues 243 to 246; the sequence is DEAD. The Helicase C-terminal domain occupies 310–480; that stretch reads GLEQGYVVVD…NVQSQLEKLV (171 aa). Residues 322 to 338 carry the Bipartite nuclear localization signal motif; sequence KRFLLLFSFLKRNLKKK. A compositionally biased stretch (basic and acidic residues) spans 543 to 561; that stretch reads DKKERRAGYNKKNHVDVYS. Residues 543–578 are disordered; it reads DKKERRAGYNKKNHVDVYSKQRSSAISQDKERGWSR.

This sequence belongs to the DEAD box helicase family. DDX18/HAS1 subfamily. Associates in the nucleolus with the 60S and pre-60S ribosomal subunits.

The protein localises to the nucleus. It localises to the nucleolus. The catalysed reaction is ATP + H2O = ADP + phosphate + H(+). Its function is as follows. ATP-dependent RNA helicase involved in 40S ribosomal subunit biogenesis. Required for the processing and cleavage of 35S pre-rRNA at sites A0, A1, and A2, leading to mature 18S rRNA. The sequence is that of ATP-dependent RNA helicase has1 (has1) from Schizosaccharomyces pombe (strain 972 / ATCC 24843) (Fission yeast).